The sequence spans 216 residues: Probable nicotinate-nucleotide adenylyltransferase (216 aa).

It belongs to the NadD family.

It carries out the reaction nicotinate beta-D-ribonucleotide + ATP + H(+) = deamido-NAD(+) + diphosphate. It participates in cofactor biosynthesis; NAD(+) biosynthesis; deamido-NAD(+) from nicotinate D-ribonucleotide: step 1/1. Its function is as follows. Catalyzes the reversible adenylation of nicotinate mononucleotide (NaMN) to nicotinic acid adenine dinucleotide (NaAD). The polypeptide is Probable nicotinate-nucleotide adenylyltransferase (Shewanella baltica (strain OS195)).